The primary structure comprises 583 residues: Membrane protein insertase YidC (583 aa).

Residues S5–P25 form a helical membrane-spanning segment. Positions K28–E50 are disordered. Residues K37–Q46 are compositionally biased toward polar residues. 5 helical membrane-spanning segments follow: residues P341–Y361, G362–A382, L427–F447, I477–I497, and L515–L535.

The protein belongs to the OXA1/ALB3/YidC family. Type 1 subfamily. Interacts with the Sec translocase complex via SecD. Specifically interacts with transmembrane segments of nascent integral membrane proteins during membrane integration.

The protein localises to the cell inner membrane. Required for the insertion and/or proper folding and/or complex formation of integral membrane proteins into the membrane. Involved in integration of membrane proteins that insert both dependently and independently of the Sec translocase complex, as well as at least some lipoproteins. Aids folding of multispanning membrane proteins. In Chlorobium limicola (strain DSM 245 / NBRC 103803 / 6330), this protein is Membrane protein insertase YidC.